An 832-amino-acid chain; its full sequence is Putative pentatricopeptide repeat-containing protein At5g08310, mitochondrial (832 aa).

A mitochondrion-targeting transit peptide spans Met1–Leu27. 19 PPR repeats span residues Asp105 to Met139, Ser140 to Val174, Asn176 to Phe212, Asp213 to Asp247, Thr252 to Leu281, Asn282 to Ala316, Asp317 to Pro351, Asp352 to Lys383, Val385 to Asn415, Asp438 to Pro472, Gly473 to Pro507, Ser508 to Pro542, Trp543 to Gly577, His578 to Pro612, Asp613 to Pro647, Thr648 to Pro682, Asp683 to Pro717, Asn718 to Pro752, and Asp753 to Pro787.

The protein belongs to the PPR family. P subfamily.

The protein resides in the mitochondrion. This Arabidopsis thaliana (Mouse-ear cress) protein is Putative pentatricopeptide repeat-containing protein At5g08310, mitochondrial.